A 196-amino-acid chain; its full sequence is NADH-quinone oxidoreductase subunit C (196 aa).

It belongs to the complex I 30 kDa subunit family. In terms of assembly, NDH-1 is composed of 14 different subunits. Subunits NuoB, C, D, E, F, and G constitute the peripheral sector of the complex.

Its subcellular location is the cell inner membrane. It catalyses the reaction a quinone + NADH + 5 H(+)(in) = a quinol + NAD(+) + 4 H(+)(out). In terms of biological role, NDH-1 shuttles electrons from NADH, via FMN and iron-sulfur (Fe-S) centers, to quinones in the respiratory chain. The immediate electron acceptor for the enzyme in this species is believed to be ubiquinone. Couples the redox reaction to proton translocation (for every two electrons transferred, four hydrogen ions are translocated across the cytoplasmic membrane), and thus conserves the redox energy in a proton gradient. The polypeptide is NADH-quinone oxidoreductase subunit C (Rickettsia bellii (strain RML369-C)).